The primary structure comprises 108 residues: Transmembrane protein 213 (108 aa).

The first 27 residues, 1 to 27 (MKRLHLAPWTSLVLGLAFLSFHPVYLA), serve as a signal peptide directing secretion. Over 28–71 (EASSGSNSTSTVHHPENLETLEQCPNVDFCPQAARCCHTGVDEY) the chain is Extracellular. N-linked (GlcNAc...) asparagine glycosylation is present at asparagine 34. Residues 72–92 (GWIAAAVGWSLLFLTLILLCV) traverse the membrane as a helical segment. Over 93-108 (DKLMKLTPDESKDLQA) the chain is Cytoplasmic.

Its subcellular location is the membrane. The sequence is that of Transmembrane protein 213 (TMEM213) from Bos taurus (Bovine).